We begin with the raw amino-acid sequence, 161 residues long: uncharacterized protein (161 aa).

This is an uncharacterized protein from Sinorhizobium fredii (strain NBRC 101917 / NGR234).